Here is a 194-residue protein sequence, read N- to C-terminus: UPF0301 protein BT_0659 (194 aa).

The protein belongs to the UPF0301 (AlgH) family.

The protein is UPF0301 protein BT_0659 of Bartonella tribocorum (strain CIP 105476 / IBS 506).